A 245-amino-acid polypeptide reads, in one-letter code: Eukaryotic translation initiation factor 6 (245 aa).

S174 and S175 each carry phosphoserine; by CK1. S231 carries the post-translational modification Phosphoserine.

This sequence belongs to the eIF-6 family. Monomer. Associates with the 60S ribosomal subunit. Post-translationally, phosphorylation at Ser-174 and Ser-175 promotes nuclear export.

Its subcellular location is the cytoplasm. It is found in the nucleus. The protein localises to the nucleolus. Its function is as follows. Binds to the 60S ribosomal subunit and prevents its association with the 40S ribosomal subunit to form the 80S initiation complex in the cytoplasm. Is also involved in ribosome biogenesis. Associates with pre-60S subunits in the nucleus and is involved in its nuclear export. Cytoplasmic release of TIF6 from 60S subunits and nuclear relocalization is promoted by the GTPase RIA1/EFL1 and by SDO1. Also required for pre-rRNA processing. This is Eukaryotic translation initiation factor 6 from Saccharomyces cerevisiae (strain ATCC 204508 / S288c) (Baker's yeast).